The chain runs to 277 residues: Shikimate dehydrogenase (NADP(+)) (277 aa).

Shikimate contacts are provided by residues 15–17 (SLS) and threonine 62. Lysine 66 functions as the Proton acceptor in the catalytic mechanism. The shikimate site is built by asparagine 87 and aspartate 102. Residues 127 to 131 (GAGGA), 151 to 156 (NRTVDK), and isoleucine 219 each bind NADP(+). Shikimate is bound at residue tyrosine 221. Glycine 242 lines the NADP(+) pocket.

Belongs to the shikimate dehydrogenase family. As to quaternary structure, homodimer.

It catalyses the reaction shikimate + NADP(+) = 3-dehydroshikimate + NADPH + H(+). It functions in the pathway metabolic intermediate biosynthesis; chorismate biosynthesis; chorismate from D-erythrose 4-phosphate and phosphoenolpyruvate: step 4/7. Involved in the biosynthesis of the chorismate, which leads to the biosynthesis of aromatic amino acids. Catalyzes the reversible NADPH linked reduction of 3-dehydroshikimate (DHSA) to yield shikimate (SA). In Bacillus anthracis (strain CDC 684 / NRRL 3495), this protein is Shikimate dehydrogenase (NADP(+)).